Consider the following 109-residue polypeptide: Protein ELF4-LIKE 3 (109 aa).

The segment at 88–109 is disordered; sequence SMEASSEGDSSEGRGNRRIRPA.

This sequence belongs to the EARLY FLOWERING 4 family. Homodimer.

The protein localises to the nucleus. Functionally, component of the central CCA1/LHY-TOC1 feedback loop in the circadian clock that promotes clock accuracy and is required for sustained rhythms in the absence of daily light/dark cycles. This chain is Protein ELF4-LIKE 3 (EFL3), found in Arabidopsis thaliana (Mouse-ear cress).